We begin with the raw amino-acid sequence, 206 residues long: MARYIGATCRLCRREGMKLFLKGDRCYTDKCAFARRSYAPGQHGQGRKKLSNYGVQLREKQKARRIYGILEAQFRKYYEKAETMRGITGENLLKLLEMRLDNVVYKLGFGSSRAEARQLVTHGHFLVNGKKVDIISYQVSAGDVISVREKSRGTEKFKTFAENPKTLPAWLEGNIENFEGKVIAEPTRADIDVPVNETLIVELYSK.

Residues 98-164 (MRLDNVVYKL…EKFKTFAENP (67 aa)) enclose the S4 RNA-binding domain.

Belongs to the universal ribosomal protein uS4 family. In terms of assembly, part of the 30S ribosomal subunit. Contacts protein S5. The interaction surface between S4 and S5 is involved in control of translational fidelity.

One of the primary rRNA binding proteins, it binds directly to 16S rRNA where it nucleates assembly of the body of the 30S subunit. In terms of biological role, with S5 and S12 plays an important role in translational accuracy. The chain is Small ribosomal subunit protein uS4A from Clostridium novyi (strain NT).